A 575-amino-acid chain; its full sequence is Lysine--tRNA ligase (575 aa).

Mg(2+)-binding residues include glutamate 412 and glutamate 419.

This sequence belongs to the class-II aminoacyl-tRNA synthetase family. As to quaternary structure, homodimer. Requires Mg(2+) as cofactor.

Its subcellular location is the cytoplasm. The enzyme catalyses tRNA(Lys) + L-lysine + ATP = L-lysyl-tRNA(Lys) + AMP + diphosphate. This is Lysine--tRNA ligase from Bacteroides fragilis (strain YCH46).